Here is a 340-residue protein sequence, read N- to C-terminus: L-galactonate-5-dehydrogenase (340 aa).

Zn(2+) is bound by residues Cys-40, Cys-65, Cys-92, Cys-95, Cys-98, Cys-106, and Glu-146.

The protein belongs to the zinc-containing alcohol dehydrogenase family. Zn(2+) is required as a cofactor.

It carries out the reaction L-galactonate + NAD(+) = keto-D-tagaturonate + NADH + H(+). Inhibited by EDTA. Its function is as follows. Catalyzes the oxidation of L-galactonate to D-tagaturonate. Required for growth on L-galactonate as the sole carbon source. In vitro, can also use L-gulonate. In Escherichia coli (strain K12), this protein is L-galactonate-5-dehydrogenase (lgoD).